A 208-amino-acid polypeptide reads, in one-letter code: Small ribosomal subunit protein uS4 (208 aa).

One can recognise an S4 RNA-binding domain in the interval 97-160 (SRLDNIVFRL…KKNDKIAEAL (64 aa)).

Belongs to the universal ribosomal protein uS4 family. In terms of assembly, part of the 30S ribosomal subunit. Contacts protein S5. The interaction surface between S4 and S5 is involved in control of translational fidelity.

In terms of biological role, one of the primary rRNA binding proteins, it binds directly to 16S rRNA where it nucleates assembly of the body of the 30S subunit. Functionally, with S5 and S12 plays an important role in translational accuracy. This is Small ribosomal subunit protein uS4 from Mesoplasma florum (strain ATCC 33453 / NBRC 100688 / NCTC 11704 / L1) (Acholeplasma florum).